The primary structure comprises 241 residues: Probable FKBP-type peptidyl-prolyl cis-trans isomerase (241 aa).

The 92-residue stretch at 150–241 (TDTVKVHYTG…VLDVNPKSEK (92 aa)) folds into the PPIase FKBP-type domain.

This sequence belongs to the FKBP-type PPIase family.

It carries out the reaction [protein]-peptidylproline (omega=180) = [protein]-peptidylproline (omega=0). Functionally, PPIases accelerate the folding of proteins. It catalyzes the cis-trans isomerization of proline imidic peptide bonds in oligopeptides. In Haemophilus influenzae (strain ATCC 51907 / DSM 11121 / KW20 / Rd), this protein is Probable FKBP-type peptidyl-prolyl cis-trans isomerase.